We begin with the raw amino-acid sequence, 316 residues long: Aspartate carbamoyltransferase catalytic subunit (316 aa).

Arg66 and Thr67 together coordinate carbamoyl phosphate. Lys94 provides a ligand contact to L-aspartate. Positions 116, 146, and 149 each coordinate carbamoyl phosphate. L-aspartate-binding residues include Arg179 and Arg234. Residues Gly275 and Pro276 each contribute to the carbamoyl phosphate site.

The protein belongs to the aspartate/ornithine carbamoyltransferase superfamily. ATCase family. As to quaternary structure, heterododecamer (2C3:3R2) of six catalytic PyrB chains organized as two trimers (C3), and six regulatory PyrI chains organized as three dimers (R2).

The catalysed reaction is carbamoyl phosphate + L-aspartate = N-carbamoyl-L-aspartate + phosphate + H(+). The protein operates within pyrimidine metabolism; UMP biosynthesis via de novo pathway; (S)-dihydroorotate from bicarbonate: step 2/3. Catalyzes the condensation of carbamoyl phosphate and aspartate to form carbamoyl aspartate and inorganic phosphate, the committed step in the de novo pyrimidine nucleotide biosynthesis pathway. This chain is Aspartate carbamoyltransferase catalytic subunit, found in Nitrosomonas europaea (strain ATCC 19718 / CIP 103999 / KCTC 2705 / NBRC 14298).